Reading from the N-terminus, the 384-residue chain is Chorismate synthase (384 aa).

NADP(+) contacts are provided by Arg-40 and Arg-46. Residues 128 to 130 (RAS), Gly-292, 307 to 311 (KPIPT), and Arg-333 each bind FMN.

The protein belongs to the chorismate synthase family. As to quaternary structure, homotetramer. FMNH2 serves as cofactor.

The catalysed reaction is 5-O-(1-carboxyvinyl)-3-phosphoshikimate = chorismate + phosphate. It participates in metabolic intermediate biosynthesis; chorismate biosynthesis; chorismate from D-erythrose 4-phosphate and phosphoenolpyruvate: step 7/7. Functionally, catalyzes the anti-1,4-elimination of the C-3 phosphate and the C-6 proR hydrogen from 5-enolpyruvylshikimate-3-phosphate (EPSP) to yield chorismate, which is the branch point compound that serves as the starting substrate for the three terminal pathways of aromatic amino acid biosynthesis. This reaction introduces a second double bond into the aromatic ring system. This is Chorismate synthase from Carboxydothermus hydrogenoformans (strain ATCC BAA-161 / DSM 6008 / Z-2901).